The primary structure comprises 510 residues: Flavonoid 3',5'-hydroxylase (510 aa).

Cysteine 447 serves as a coordination point for heme.

Belongs to the cytochrome P450 family. It depends on heme as a cofactor.

It carries out the reaction a 3',5'-unsubstituted flavanone + 2 reduced [NADPH--hemoprotein reductase] + 2 O2 = a 3',5'-dihydroxyflavanone + 2 oxidized [NADPH--hemoprotein reductase] + 2 H2O + 2 H(+). It participates in pigment biosynthesis; anthocyanin biosynthesis. Catalyzes the 3'5'-hydroxylation of naringenin and eriodictyol to form 5,7,3,'4',5'-pentahydroxyflavanone and 3',5'-hydroxylation of dihydrokaempferol and dihydroquercetin to form dihydromyricetin. This chain is Flavonoid 3',5'-hydroxylase (CYP75A7), found in Eustoma exaltatum subsp. russellianum (Bluebells).